The following is an 886-amino-acid chain: MSQRGLEALLRPKSIAVIGASMKPNRAGYLMMRNLLAGGFNGPVLPVTPAWKAVLGVLAWPDIASLPFTPDLAVLCTNASRNLALLEELGEKGCKTCIILSAPASQHEDLRACALRHNMRLLGPNSLGLLAPWQGLNASFSPVPIKRGKLAFISQSAAVSNTILDWAQQRKMGFSYFIALGDSLDIDVDELLDYLARDSKTSAILLYLEQLSDARRFVSAARSASRNKPILVIKSGRSPAAQRLLNTTAGMDPAWDAAIQRAGLLRVQDTHELFSAVETLSHMRPLRGDRLMIISNGAAPAALALDALWSRNGKLATLSEETCQKLRDALPEHVAISNPLDLRDDASSEHYIKTLDILLHSQDFDALMVIHSPSAAAPATESAQVLIEAVKHHPRSKYVSLLTNWCGEHSSQEARRLFSEAGLPTYRTPEGTITAFMHMVEYRRNQKQLRETPALPSNLTSNTAEAHLLLQQAIAEGATSLDTHEVQPILQAYGMNTLPTWIASDSTEAVHIAEQIGYPVALKLRSPDIPHKSEVQGVMLYLRTANEVQQAANAIFDRVKMAWPQARVHGLLVQSMANRAGAQELRVVVEHDPVFGPLIMLGEGGVEWRPEDQAVVALPPLNMNLARYLVIQGIKSKKIRARSALRPLDVAGLSQLLVQVSNLIVDCPEIQRLDIHPLLASGSEFTALDVTLDISPFEGDNESRLAVRPYPHQLEEWVELKNGERCLFRPILPEDEPQLQQFISRVTKEDLYYRYFSEINEFTHEDLANMTQIDYDREMAFVAVRRIDQTEEILGVTRAISDPDNIDAEFAVLVRSDLKGLGLGRRLMEKLITYTRDHGLQRLNGITMPNNRGMVALARKLGFNVDIQLEEGIVGLTLNLAQREES.

The ATP-grasp domain occupies 487-523; the sequence is QPILQAYGMNTLPTWIASDSTEAVHIAEQIGYPVALK. The region spanning 726 to 881 is the N-acetyltransferase domain; sequence CLFRPILPED…GIVGLTLNLA (156 aa).

In the N-terminal section; belongs to the acetate CoA ligase alpha subunit family. The protein in the central section; belongs to the acetate CoA ligase beta subunit family. As to quaternary structure, stable tetramer in solution. Oligomerizes to an octameric form by autoacetylation. In terms of processing, autoacetylated. Deacetylated by CobB.

It carries out the reaction L-lysyl-[protein] + acetyl-CoA = N(6)-acetyl-L-lysyl-[protein] + CoA + H(+). Its function is as follows. Catalyzes the acetyl-CoA-dependent acetylation of lysine residues of a large number of target proteins. Acetylates RNase R in exponential phase cells and RNase II. Required for the glucose-dependent acetylation on multiple lysines of alpha, beta and beta' RNAP subunits. Also acetylates acetyl-coenzyme A synthetase (Acs) and the chromosomal replication initiator protein DnaA, and inhibits their activity. Overexpression leads to the acetylation of a large number of additional proteins and inhibits motility. This Escherichia coli (strain K12) protein is Peptidyl-lysine N-acetyltransferase PatZ.